The sequence spans 123 residues: Small ribosomal subunit protein uS12 (123 aa).

3-methylthioaspartic acid is present on D89. Positions 100–123 are disordered; sequence GSLDTSGVSDRKQGRSKYGTKRPK. Residues 113-123 show a composition bias toward basic residues; it reads GRSKYGTKRPK.

The protein belongs to the universal ribosomal protein uS12 family. As to quaternary structure, part of the 30S ribosomal subunit. Contacts proteins S8 and S17. May interact with IF1 in the 30S initiation complex.

In terms of biological role, with S4 and S5 plays an important role in translational accuracy. Interacts with and stabilizes bases of the 16S rRNA that are involved in tRNA selection in the A site and with the mRNA backbone. Located at the interface of the 30S and 50S subunits, it traverses the body of the 30S subunit contacting proteins on the other side and probably holding the rRNA structure together. The combined cluster of proteins S8, S12 and S17 appears to hold together the shoulder and platform of the 30S subunit. This chain is Small ribosomal subunit protein uS12, found in Saccharophagus degradans (strain 2-40 / ATCC 43961 / DSM 17024).